The sequence spans 92 residues: UPF0250 protein VV0902 (92 aa).

This sequence belongs to the UPF0250 family.

This Vibrio vulnificus (strain YJ016) protein is UPF0250 protein VV0902.